We begin with the raw amino-acid sequence, 153 residues long: Movement protein (153 aa).

2 disordered regions span residues 1–24 and 121–153; these read MAQE…EQDP and PWVA…RNQR. The segment covering 121–138 has biased composition (polar residues); the sequence is PWVATLIPSQSAGPPQRS.

It belongs to the luteoviruses movement protein family.

In terms of biological role, transports viral genome to neighboring plant cells directly through plasmosdesmata, without any budding. The movement protein allows efficient cell to cell propagation, by bypassing the host cell wall barrier. The chain is Movement protein from Avena byzantina (Oat).